Consider the following 198-residue polypeptide: Protein hunchback (198 aa).

Disordered stretches follow at residues 16–111 (SHHH…LPGL) and 152–198 (NDKL…KYMA). The segment covering 17 to 31 (HHHHHHHAHHSHHQH) has biased composition (basic residues). Composition is skewed to low complexity over residues 35-46 (SNSNSNASSPHQ) and 56-83 (SNTN…QQQQ). Residues 95 to 105 (PSPSNNDQNSP) show a composition bias toward polar residues. The span at 179 to 198 (EPEKEHDLMSNSSEDMKYMA) shows a compositional bias: basic and acidic residues.

It belongs to the hunchback C2H2-type zinc-finger protein family.

It is found in the nucleus. Its function is as follows. Gap class segmentation protein that controls development of head structures. This is Protein hunchback (hb) from Drosophila lineosetae (Fruit fly).